A 249-amino-acid chain; its full sequence is L-fucose operon activator (249 aa).

The HTH deoR-type domain occupies 1–56 (MNYRDELILQWVNQQGKASVIELAQHCDISVETIRRDLNKLANKGLLHRTHGGAVS). Positions 18–37 (ASVIELAQHCDISVETIRRD) form a DNA-binding region, H-T-H motif.

Functionally, transcriptional activator of the fuc operon. This chain is L-fucose operon activator (fucR), found in Haemophilus influenzae (strain ATCC 51907 / DSM 11121 / KW20 / Rd).